The primary structure comprises 291 residues: Glycine--tRNA ligase alpha subunit (291 aa).

This sequence belongs to the class-II aminoacyl-tRNA synthetase family. As to quaternary structure, tetramer of two alpha and two beta subunits.

The protein localises to the cytoplasm. The enzyme catalyses tRNA(Gly) + glycine + ATP = glycyl-tRNA(Gly) + AMP + diphosphate. This Microcystis aeruginosa (strain NIES-843 / IAM M-2473) protein is Glycine--tRNA ligase alpha subunit.